Here is a 324-residue protein sequence, read N- to C-terminus: Adducin-related protein C1289.14 (324 aa).

The protein belongs to the aldolase class II family. Adducin subfamily.

In Schizosaccharomyces pombe (strain 972 / ATCC 24843) (Fission yeast), this protein is Adducin-related protein C1289.14.